The sequence spans 472 residues: 3-isopropylmalate dehydratase large subunit (472 aa).

3 residues coordinate [4Fe-4S] cluster: Cys-351, Cys-412, and Cys-415.

Belongs to the aconitase/IPM isomerase family. LeuC type 1 subfamily. As to quaternary structure, heterodimer of LeuC and LeuD. [4Fe-4S] cluster serves as cofactor.

The enzyme catalyses (2R,3S)-3-isopropylmalate = (2S)-2-isopropylmalate. The protein operates within amino-acid biosynthesis; L-leucine biosynthesis; L-leucine from 3-methyl-2-oxobutanoate: step 2/4. In terms of biological role, catalyzes the isomerization between 2-isopropylmalate and 3-isopropylmalate, via the formation of 2-isopropylmaleate. The sequence is that of 3-isopropylmalate dehydratase large subunit from Marinobacter nauticus (strain ATCC 700491 / DSM 11845 / VT8) (Marinobacter aquaeolei).